We begin with the raw amino-acid sequence, 547 residues long: Chaperonin GroEL (547 aa).

Residues 30–33 (TLGP), Lys-51, 87–91 (DGTTT), Gly-415, 479–481 (NAA), and Asp-495 each bind ATP. Residues 525–547 (PKEDSPGAGAGMGGMGGMGGMDM) are disordered. The segment covering 532–547 (AGAGMGGMGGMGGMDM) has biased composition (gly residues).

The protein belongs to the chaperonin (HSP60) family. As to quaternary structure, forms a cylinder of 14 subunits composed of two heptameric rings stacked back-to-back. Interacts with the co-chaperonin GroES.

The protein resides in the cytoplasm. The enzyme catalyses ATP + H2O + a folded polypeptide = ADP + phosphate + an unfolded polypeptide.. Functionally, together with its co-chaperonin GroES, plays an essential role in assisting protein folding. The GroEL-GroES system forms a nano-cage that allows encapsulation of the non-native substrate proteins and provides a physical environment optimized to promote and accelerate protein folding. The polypeptide is Chaperonin GroEL (Nitrosomonas europaea (strain ATCC 19718 / CIP 103999 / KCTC 2705 / NBRC 14298)).